The primary structure comprises 152 residues: UPF0266 membrane protein YobD (152 aa).

3 helical membrane-spanning segments follow: residues 6 to 26 (LVLI…QFIM), 45 to 65 (VDSV…VTSH), and 67 to 87 (AQMT…IFWI).

The protein belongs to the UPF0266 family.

It localises to the cell inner membrane. In Salmonella arizonae (strain ATCC BAA-731 / CDC346-86 / RSK2980), this protein is UPF0266 membrane protein YobD.